The following is a 401-amino-acid chain: Acetate kinase (401 aa).

Mg(2+) is bound at residue asparagine 9. An ATP-binding site is contributed by lysine 16. Arginine 88 is a binding site for substrate. Catalysis depends on aspartate 147, which acts as the Proton donor/acceptor. Residues 207 to 211 (HLGNG), 282 to 284 (DCR), and 333 to 337 (GIGEN) each bind ATP. Mg(2+) is bound at residue glutamate 388.

This sequence belongs to the acetokinase family. In terms of assembly, homodimer. Mg(2+) is required as a cofactor. Mn(2+) serves as cofactor.

It localises to the cytoplasm. It catalyses the reaction acetate + ATP = acetyl phosphate + ADP. It participates in metabolic intermediate biosynthesis; acetyl-CoA biosynthesis; acetyl-CoA from acetate: step 1/2. Catalyzes the formation of acetyl phosphate from acetate and ATP. Can also catalyze the reverse reaction. This Haemophilus influenzae (strain ATCC 51907 / DSM 11121 / KW20 / Rd) protein is Acetate kinase.